Here is a 253-residue protein sequence, read N- to C-terminus: Glutamate racemase (253 aa).

Substrate contacts are provided by residues 7-8 and 39-40; these read DS and YG. C70 acts as the Proton donor/acceptor in catalysis. Residue 71-72 coordinates substrate; the sequence is NS. Catalysis depends on C179, which acts as the Proton donor/acceptor. 180 to 181 contacts substrate; sequence TH.

It belongs to the aspartate/glutamate racemases family.

It catalyses the reaction L-glutamate = D-glutamate. It participates in cell wall biogenesis; peptidoglycan biosynthesis. Provides the (R)-glutamate required for cell wall biosynthesis. This chain is Glutamate racemase, found in Nitratiruptor sp. (strain SB155-2).